The following is a 504-amino-acid chain: Maturase K (504 aa).

Belongs to the intron maturase 2 family. MatK subfamily.

It localises to the plastid. The protein resides in the chloroplast. Functionally, usually encoded in the trnK tRNA gene intron. Probably assists in splicing its own and other chloroplast group II introns. In Carpinus betulus (European hornbeam), this protein is Maturase K.